Reading from the N-terminus, the 189-residue chain is Probable nicotinate-nucleotide adenylyltransferase (189 aa).

It belongs to the NadD family.

The catalysed reaction is nicotinate beta-D-ribonucleotide + ATP + H(+) = deamido-NAD(+) + diphosphate. Its pathway is cofactor biosynthesis; NAD(+) biosynthesis; deamido-NAD(+) from nicotinate D-ribonucleotide: step 1/1. Its function is as follows. Catalyzes the reversible adenylation of nicotinate mononucleotide (NaMN) to nicotinic acid adenine dinucleotide (NaAD). This Staphylococcus aureus (strain USA300 / TCH1516) protein is Probable nicotinate-nucleotide adenylyltransferase.